The chain runs to 286 residues: Glycine--tRNA ligase alpha subunit (286 aa).

It belongs to the class-II aminoacyl-tRNA synthetase family. In terms of assembly, tetramer of two alpha and two beta subunits.

It localises to the cytoplasm. It catalyses the reaction tRNA(Gly) + glycine + ATP = glycyl-tRNA(Gly) + AMP + diphosphate. The chain is Glycine--tRNA ligase alpha subunit from Thermotoga sp. (strain RQ2).